Consider the following 399-residue polypeptide: Phosphoglycerate kinase (399 aa).

Substrate-binding positions include 22–24 (DFN), Arg-38, 61–64 (HLGR), Arg-120, and Arg-153. ATP is bound by residues Lys-204, Glu-326, and 353–356 (GGDT).

It belongs to the phosphoglycerate kinase family. In terms of assembly, monomer.

It is found in the cytoplasm. It carries out the reaction (2R)-3-phosphoglycerate + ATP = (2R)-3-phospho-glyceroyl phosphate + ADP. It participates in carbohydrate degradation; glycolysis; pyruvate from D-glyceraldehyde 3-phosphate: step 2/5. In Geotalea daltonii (strain DSM 22248 / JCM 15807 / FRC-32) (Geobacter daltonii), this protein is Phosphoglycerate kinase.